The sequence spans 60 residues: Venom protein 4.1 (60 aa).

Residues methionine 1 to alanine 26 form the signal peptide.

It belongs to the non-disulfide-bridged peptide (NDBP) superfamily. Expressed by the venom gland.

The protein localises to the secreted. The sequence is that of Venom protein 4.1 from Lychas mucronatus (Chinese swimming scorpion).